Reading from the N-terminus, the 237-residue chain is Urease accessory protein UreF (237 aa).

The protein belongs to the UreF family. As to quaternary structure, ureD, UreF and UreG form a complex that acts as a GTP-hydrolysis-dependent molecular chaperone, activating the urease apoprotein by helping to assemble the nickel containing metallocenter of UreC. The UreE protein probably delivers the nickel.

The protein resides in the cytoplasm. Required for maturation of urease via the functional incorporation of the urease nickel metallocenter. The protein is Urease accessory protein UreF of Rhodopseudomonas palustris (strain HaA2).